The following is a 315-amino-acid chain: Ribose-phosphate pyrophosphokinase (315 aa).

Residues 37 to 39 and 96 to 97 each bind ATP; these read DGE and RQ. Mg(2+) is bound by residues H131 and D171. K195 is an active-site residue. D-ribose 5-phosphate is bound by residues R197, D221, and 225 to 229; that span reads DTGGT.

It belongs to the ribose-phosphate pyrophosphokinase family. Class I subfamily. In terms of assembly, homohexamer. Requires Mg(2+) as cofactor.

The protein resides in the cytoplasm. The enzyme catalyses D-ribose 5-phosphate + ATP = 5-phospho-alpha-D-ribose 1-diphosphate + AMP + H(+). The protein operates within metabolic intermediate biosynthesis; 5-phospho-alpha-D-ribose 1-diphosphate biosynthesis; 5-phospho-alpha-D-ribose 1-diphosphate from D-ribose 5-phosphate (route I): step 1/1. Functionally, involved in the biosynthesis of the central metabolite phospho-alpha-D-ribosyl-1-pyrophosphate (PRPP) via the transfer of pyrophosphoryl group from ATP to 1-hydroxyl of ribose-5-phosphate (Rib-5-P). This is Ribose-phosphate pyrophosphokinase from Haemophilus influenzae (strain ATCC 51907 / DSM 11121 / KW20 / Rd).